The primary structure comprises 155 residues: MRLRLIAVGSRMPRWVEEGWQEYVKRLPAELSLELVEIPLNTRGKNADVARLIRQEGEAMLARVQPGERVVTLEVEGRPWSTEQLARELDRWRLDARTVNLMVGGPEGLAPEVCARSEQRWSLSPLTLPHPLVRILVGEQIYRAWTVLSGHPYHK.

Residues leucine 73, glycine 104, and 123–128 each bind S-adenosyl-L-methionine; that span reads LSPLTL.

It belongs to the RNA methyltransferase RlmH family. Homodimer.

The protein localises to the cytoplasm. The catalysed reaction is pseudouridine(1915) in 23S rRNA + S-adenosyl-L-methionine = N(3)-methylpseudouridine(1915) in 23S rRNA + S-adenosyl-L-homocysteine + H(+). Specifically methylates the pseudouridine at position 1915 (m3Psi1915) in 23S rRNA. In Pseudomonas aeruginosa (strain LESB58), this protein is Ribosomal RNA large subunit methyltransferase H.